The following is a 162-amino-acid chain: Endoribonuclease YbeY (162 aa).

Residues His-118, His-122, and His-128 each coordinate Zn(2+).

It belongs to the endoribonuclease YbeY family. It depends on Zn(2+) as a cofactor.

It is found in the cytoplasm. Single strand-specific metallo-endoribonuclease involved in late-stage 70S ribosome quality control and in maturation of the 3' terminus of the 16S rRNA. The polypeptide is Endoribonuclease YbeY (Caulobacter sp. (strain K31)).